Consider the following 65-residue polypeptide: STRKTSWPELVGVTAEEAEKIKEEMSGVEIQVVPPGSFVTADYKPQRVRLYVDESNKVTRTPGIG.

It belongs to the protease inhibitor I13 (potato type I serine protease inhibitor) family.

Functionally, inhibits subtilisin-type microbial serine proteases including proteinase K, subtilisin BPN', subtilisin Carlsberg, subtilisin E, A.oryzae protease and S.griseus alkaline protease. Weakly inhibits pronase E. Does not inhibit trypsin or chymotrypsin. In Canavalia lineata (Beach bean), this protein is Subtilisin inhibitor CLSI-I.